Consider the following 369-residue polypeptide: Anhydro-N-acetylmuramic acid kinase (369 aa).

12 to 19 (GTSLDGVD) is a binding site for ATP.

The protein belongs to the anhydro-N-acetylmuramic acid kinase family.

The catalysed reaction is 1,6-anhydro-N-acetyl-beta-muramate + ATP + H2O = N-acetyl-D-muramate 6-phosphate + ADP + H(+). It participates in amino-sugar metabolism; 1,6-anhydro-N-acetylmuramate degradation. The protein operates within cell wall biogenesis; peptidoglycan recycling. Its function is as follows. Catalyzes the specific phosphorylation of 1,6-anhydro-N-acetylmuramic acid (anhMurNAc) with the simultaneous cleavage of the 1,6-anhydro ring, generating MurNAc-6-P. Is required for the utilization of anhMurNAc either imported from the medium or derived from its own cell wall murein, and thus plays a role in cell wall recycling. In Escherichia coli O1:K1 / APEC, this protein is Anhydro-N-acetylmuramic acid kinase.